The sequence spans 540 residues: Chaperonin GroEL (540 aa).

ATP is bound by residues 29–32 (TLGP), 86–90 (DGTTT), Gly-413, 476–478 (NAA), and Asp-492.

Belongs to the chaperonin (HSP60) family. In terms of assembly, forms a cylinder of 14 subunits composed of two heptameric rings stacked back-to-back. Interacts with the co-chaperonin GroES.

It is found in the cytoplasm. It catalyses the reaction ATP + H2O + a folded polypeptide = ADP + phosphate + an unfolded polypeptide.. Together with its co-chaperonin GroES, plays an essential role in assisting protein folding. The GroEL-GroES system forms a nano-cage that allows encapsulation of the non-native substrate proteins and provides a physical environment optimized to promote and accelerate protein folding. This chain is Chaperonin GroEL, found in Streptococcus agalactiae serotype V (strain ATCC BAA-611 / 2603 V/R).